Here is a 162-residue protein sequence, read N- to C-terminus: Phycoerythrocyanin alpha chain (162 aa).

A (15Z)-phycoviolobilin-binding site is contributed by Cys-84.

It belongs to the phycobiliprotein family. Heterodimer of an alpha and a beta chain. Contains one covalently linked bilin chromophore.

Its subcellular location is the cellular thylakoid membrane. Light-harvesting photosynthetic bile pigment-protein from the phycobiliprotein complex. The sequence is that of Phycoerythrocyanin alpha chain (pecA) from Nostoc sp. (strain PCC 7120 / SAG 25.82 / UTEX 2576).